Consider the following 379-residue polypeptide: Cytochrome-c peroxidase IdrP1 (379 aa).

An N-terminal signal peptide occupies residues 1–24 (MNNRKPLQLSLLVASLAVAFTASA). Cytochrome c domains are found at residues 50–158 (EKIA…DAFK) and 204–355 (TSQK…EALS). The heme c site is built by C72, C75, H76, C219, C222, and H223.

The iodate reductase (Idr) complex is composed of a molybdopterin-dependent iodate reductase (IdrA and IdrB subunits) and two associated peroxidases (IdrP1 and IdrP2). Heme c is required as a cofactor.

It localises to the periplasm. It catalyses the reaction 2 Fe(II)-[cytochrome c] + H2O2 + 2 H(+) = 2 Fe(III)-[cytochrome c] + 2 H2O. Involved in iodate respiration. Probably reduces the H(2)O(2) produced by IdrA/IdrB to H(2)O, using a reduced cytochrome c as the electron donor. The sequence is that of Cytochrome-c peroxidase IdrP1 from Pseudomonas sp. (strain SCT).